The following is an 870-amino-acid chain: DNA mismatch repair protein MutS (870 aa).

621 to 628 (GPNMAGKS) contributes to the ATP binding site. Positions 813-834 (GAPRIAKSRRQRTPDPSPQFSL) are disordered.

The protein belongs to the DNA mismatch repair MutS family.

In terms of biological role, this protein is involved in the repair of mismatches in DNA. It is possible that it carries out the mismatch recognition step. This protein has a weak ATPase activity. In Pelobacter propionicus (strain DSM 2379 / NBRC 103807 / OttBd1), this protein is DNA mismatch repair protein MutS.